The primary structure comprises 388 residues: MKHLHRFFSSDASGGIILIIAAILAMIMANSGATSGWYHDFLETPVQLRVGSLEINKNMLLWINDALMAVFFLLVGLEVKRELMQGSLASLRQAAFPVIAAIGGMIVPALLYLAFNYADPITREGWAIPAATDIAFALGVLALLGSRVPLALKIFLMALAIIDDLGAIIIIALFYTNDLSMASLGVAAVAIAVLAVLNLCGARRTGVYILVGVVLWTAVLKSGVHATLAGVIVGFFIPLKEKHGRSPAKRLEHVLHPWVAYLILPLFAFANAGVSLQGVTLDGLTSILPLGIIAGLLIGKPLGISLFCWLALRLKLAHLPEGTTYQQIMVVGILCGIGFTMSIFIASLAFGSVDPELINWAKLGILVGSISSAVIGYSWLRVRLRPSV.

The Cytoplasmic portion of the chain corresponds to methionine 1 to aspartate 11. A helical membrane pass occupies residues alanine 12 to serine 31. Residues glycine 32–asparagine 58 are Periplasmic-facing. Positions proline 45–asparagine 58 are important for dimerization. The helical transmembrane segment at methionine 59 to lysine 80 threads the bilayer. Residues arginine 81–phenylalanine 96 lie on the Cytoplasmic side of the membrane. Residues proline 97–asparagine 116 form a helical membrane-spanning segment. Topologically, residues tyrosine 117–threonine 122 are periplasmic. Residues arginine 123 to alanine 130 traverse the membrane as a helical segment. Residues alanine 131–isoleucine 154 are Cytoplasmic-facing. Residues phenylalanine 155 to threonine 176 traverse the membrane as a helical segment. Topologically, residues asparagine 177–serine 180 are periplasmic. The helical transmembrane segment at methionine 181–cysteine 200 threads the bilayer. The Cytoplasmic portion of the chain corresponds to glycine 201–arginine 204. The chain crosses the membrane as a helical span at residues threonine 205–serine 222. A topological domain (periplasmic) is located at residue glycine 223. A helical membrane pass occupies residues valine 224–phenylalanine 236. The Cytoplasmic segment spans residues isoleucine 237–histidine 253. A helical transmembrane segment spans residues valine 254 to alanine 272. At glycine 273–serine 286 the chain is on the periplasmic side. Residues isoleucine 287–leucine 310 form a helical membrane-spanning segment. Residues alanine 311 to phenylalanine 339 lie on the Cytoplasmic side of the membrane. The chain crosses the membrane as a helical span at residues threonine 340 to phenylalanine 350. The Periplasmic segment spans residues glycine 351–leucine 357. Residues isoleucine 358–leucine 380 form a helical membrane-spanning segment. Residues arginine 381 to valine 388 lie on the Cytoplasmic side of the membrane.

It belongs to the NhaA Na(+)/H(+) (TC 2.A.33) antiporter family. As to quaternary structure, monomer. Homodimer. Under routine stress conditions, the monomeric form is fully functional. However, the dimeric form is much more efficient in conferring growth resistance under extreme stress conditions.

The protein resides in the cell inner membrane. It catalyses the reaction Na(+)(in) + 2 H(+)(out) = Na(+)(out) + 2 H(+)(in). The catalysed reaction is Li(+)(in) + 2 H(+)(out) = Li(+)(out) + 2 H(+)(in). Its activity is regulated as follows. Activity is regulated by pH. Active at alkaline pH. Activity is strongly down-regulated below pH 6.5 and a dramatic increase in activity is observed upon increase of the pH from 6.5 to 8.5. Na(+)/H(+) antiporter that extrudes sodium in exchange for external protons. Plays an important role in the regulation of intracellular pH, cellular Na(+) content and cell volume. Catalyzes the exchange of 2 H(+) per Na(+). This stoichiometry applies at both neutral and alkaline pH values. In addition, can also transport lithium and is involved in lithium detoxification. Binding of the Li(+) and H(+) ligands to NhaA is coupled and antagonistic. This chain is Na(+)/H(+) antiporter NhaA, found in Escherichia coli (strain K12).